Here is a 248-residue protein sequence, read N- to C-terminus: Phosphoglycerate mutase (248 aa).

Substrate contacts are provided by residues 8-15 (RHGQSEWN), 21-22 (TG), Arg-60, 87-90 (ERHY), Lys-98, 114-115 (RR), and 183-184 (GN). His-9 serves as the catalytic Tele-phosphohistidine intermediate. Catalysis depends on Glu-87, which acts as the Proton donor/acceptor.

It belongs to the phosphoglycerate mutase family. BPG-dependent PGAM subfamily.

It localises to the cytoplasm. It catalyses the reaction (2R)-2-phosphoglycerate = (2R)-3-phosphoglycerate. It functions in the pathway carbohydrate degradation; glycolysis; pyruvate from D-glyceraldehyde 3-phosphate: step 3/5. In Candida albicans (strain SC5314 / ATCC MYA-2876) (Yeast), this protein is Phosphoglycerate mutase (GPM1).